A 305-amino-acid chain; its full sequence is MARPLKEGLDYFPLDVDADYDDKFQLIETLHGPTGFAIMIKLFMKIYSQNFYYKWTETEQILFAKRVNVDINTLKTVVNDCIKYDLFDNNLFSEFQILTSLGVQERYFTAIGRRKKQIVVLEYLLLDRPEVINLCPKIVFANINVVNDDINAEQEELMPALSAQTKGKESKVNESKAVVSEQEKLPEKIVKEKPTTTAYKFWEENVAITGLSEFDRELLKKLISLGGNELTVHAMKKAIELNRRRMKTVDTVLRGWLDNGVKTTAEADEQEKNWNGGAKKNARAEPAKQEIKISDQYNFGATRTD.

The interval 267-287 is disordered; sequence ADEQEKNWNGGAKKNARAEPA.

This sequence belongs to the DnaB/DnaD family.

This is an uncharacterized protein from Listeria innocua serovar 6a (strain ATCC BAA-680 / CLIP 11262).